The sequence spans 455 residues: tRNA modification GTPase MnmE (455 aa).

3 residues coordinate (6S)-5-formyl-5,6,7,8-tetrahydrofolate: arginine 25, glutamate 85, and arginine 124. The TrmE-type G domain occupies 221–375; the sequence is GLSTAIIGRP…IEERINKLFF (155 aa). K(+) is bound at residue asparagine 231. GTP contacts are provided by residues 231–236, 250–256, and 275–278; these read NVGKSS, TDIEGTT, and DTAG. A Mg(2+)-binding site is contributed by serine 235. Positions 250, 252, and 255 each coordinate K(+). Position 256 (threonine 256) interacts with Mg(2+). Lysine 455 is a binding site for (6S)-5-formyl-5,6,7,8-tetrahydrofolate.

This sequence belongs to the TRAFAC class TrmE-Era-EngA-EngB-Septin-like GTPase superfamily. TrmE GTPase family. As to quaternary structure, homodimer. Heterotetramer of two MnmE and two MnmG subunits. It depends on K(+) as a cofactor.

The protein resides in the cytoplasm. Exhibits a very high intrinsic GTPase hydrolysis rate. Involved in the addition of a carboxymethylaminomethyl (cmnm) group at the wobble position (U34) of certain tRNAs, forming tRNA-cmnm(5)s(2)U34. The chain is tRNA modification GTPase MnmE from Streptococcus mutans serotype c (strain ATCC 700610 / UA159).